The following is a 344-amino-acid chain: MLAKIEQLLQEIEGLQAANAEELEALRIKYLSKKGAINELMADFRNVPAEQKKEVGMKLNELKNKAQERIASLKEAFETQDNSAAEMDLTRTAYPIELGTRHPLSIVKNEIIDIFHRLGFSIADGPEIEDDLHVFTAMNFAEDHPARDMQDTFFIEANQEDVKKNIVLRTHTSSVQARAMEHSQPPIRIICPGRVYRNEAISYRAHAFFHQVEALYIDKNVSFTDLKQVLLLFAKEMFGEDTQIRLRPSYFPFTEPSAEMDISCNICGGKGCPFCKGTGWVEILGCGMVDPNVLEANGIDSKVYSGYALGMGIERITNLKYRVNDLRLFSENDTRFLKEFEAAN.

Mg(2+) is bound at residue E255.

This sequence belongs to the class-II aminoacyl-tRNA synthetase family. Phe-tRNA synthetase alpha subunit type 1 subfamily. In terms of assembly, tetramer of two alpha and two beta subunits. It depends on Mg(2+) as a cofactor.

Its subcellular location is the cytoplasm. It carries out the reaction tRNA(Phe) + L-phenylalanine + ATP = L-phenylalanyl-tRNA(Phe) + AMP + diphosphate + H(+). The sequence is that of Phenylalanine--tRNA ligase alpha subunit from Phocaeicola vulgatus (strain ATCC 8482 / DSM 1447 / JCM 5826 / CCUG 4940 / NBRC 14291 / NCTC 11154) (Bacteroides vulgatus).